The chain runs to 431 residues: Keratin, type I cytoskeletal 20 (431 aa).

Residues 1–23 form a disordered region; sequence MDFSRQSFHRSLSSSSQGPALSM. The head stretch occupies residues 1–76; the sequence is MDFSRQSFHR…SNGSDLFGGN (76 aa). Serine 13 is modified (phosphoserine; by MAPKAPK2, MAPKAPK3 and PKC). 2 positions are modified to phosphoserine: serine 16 and serine 26. Residues 77–112 form a coil 1A region; that stretch reads GKLAMQNLNDRLANYLEKVRSLEQSNSRLEAQIKQW. Residues 77-388 enclose the IF rod domain; the sequence is GKLAMQNLND…RLLEGEDIKT (312 aa). Residues 113-130 are linker 1; sequence YETNAPSTIRDYSSYYAQ. The tract at residues 131 to 222 is coil 1B; the sequence is IKELQNQVKD…KEHQEEVEVL (92 aa). Residues 223–245 form a linker 12 region; the sequence is RRQLGNNVNVEVDAAPGLNLGEI. The segment at 246-384 is coil 2; the sequence is MNEMRQRYEV…ATYRRLLEGE (139 aa). The tract at residues 385–431 is tail; the sequence is DIKTTEYQLSTLEMKDIKKTRKIKTVVEEVVDGKVVSSEVKEIEESV.

The protein belongs to the intermediate filament family. Heterotetramer of two type I and two type II keratins. Associates with KRT8. Post-translationally, hyperphosphorylation at Ser-13 occurs during the early stages of apoptosis but becomes less prominent during the later stages. Phosphorylation at Ser-13 also increases in response to stress brought on by cell injury. In terms of processing, proteolytically cleaved by caspases during apoptosis. Cleavage occurs at Asp-235. Expressed at low levels in the more differentiated suprabasal regions of the small intestine, and at higher levels in the colon, mainly in the upper region and in scattered cells throughout the remaining epithelium. Also expressed in epithelial cells of bladder, ileum and stomach and at lower levels in pancreas and earskin. The phosphorylated form is nearly exclusively expressed in goblet cells of the small intestine and in the lumen-proximal cells of the colon (at protein level). Also expressed in jejunum and duodenum.

Plays a significant role in maintaining keratin filament organization in intestinal epithelia. When phosphorylated, plays a role in the secretion of mucin in the small intestine. The sequence is that of Keratin, type I cytoskeletal 20 from Mus musculus (Mouse).